The primary structure comprises 218 residues: CD99 antigen-like protein 2 (218 aa).

The N-terminal stretch at 1 to 25 (MVAWRSAFLVCLAFSLATLVQRGSG) is a signal peptide. Over 26–136 (DFDDFNLKDA…PGSGMVAETG (111 aa)) the chain is Extracellular. Residues 72–128 (LADALDDRNDRDDGRRKPIAGGGGFSDKDLEDIVGGGEYKPDKGKGDGRYGSNDDPG) form a disordered region. Basic and acidic residues-rich tracts occupy residues 76-87 (LDDRNDRDDGRR) and 110-119 (YKPDKGKGDG). Ser129 carries O-linked (Xyl...) (chondroitin sulfate) serine glycosylation. A helical transmembrane segment spans residues 137 to 157 (TIAGVASALAMALIGAVSSYI). Topologically, residues 158–218 (SYQQKKFCFS…EPPPSEPARI (61 aa)) are cytoplasmic.

The protein belongs to the CD99 family. In terms of processing, O-glycosylated.

The protein localises to the cell membrane. Its subcellular location is the cell junction. It localises to the secreted. In terms of biological role, plays a role in a late step of leukocyte extravasation helping cells to overcome the endothelial basement membrane. Acts at the same site as, but independently of, PECAM1. Homophilic adhesion molecule, but these interactions may not be required for cell aggregation. The protein is CD99 antigen-like protein 2 (CD99L2) of Pongo abelii (Sumatran orangutan).